We begin with the raw amino-acid sequence, 442 residues long: Ribosomal protein uS12 methylthiotransferase RimO (442 aa).

The 117-residue stretch at 13–129 folds into the MTTase N-terminal domain; it reads RSIFLLSLGC…ILNILGTAYD (117 aa). 6 residues coordinate [4Fe-4S] cluster: Cys-22, Cys-58, Cys-92, Cys-153, Cys-157, and Cys-160. In terms of domain architecture, Radical SAM core spans 139 to 369; the sequence is LSPSHYAWLK…MELQEGISEK (231 aa). The 68-residue stretch at 372 to 439 folds into the TRAM domain; that stretch reads RALEEKALKV…AYELVGRIKN (68 aa).

Belongs to the methylthiotransferase family. RimO subfamily. It depends on [4Fe-4S] cluster as a cofactor.

Its subcellular location is the cytoplasm. It catalyses the reaction L-aspartate(89)-[ribosomal protein uS12]-hydrogen + (sulfur carrier)-SH + AH2 + 2 S-adenosyl-L-methionine = 3-methylsulfanyl-L-aspartate(89)-[ribosomal protein uS12]-hydrogen + (sulfur carrier)-H + 5'-deoxyadenosine + L-methionine + A + S-adenosyl-L-homocysteine + 2 H(+). Catalyzes the methylthiolation of an aspartic acid residue of ribosomal protein uS12. In Chlorobium phaeobacteroides (strain BS1), this protein is Ribosomal protein uS12 methylthiotransferase RimO.